The following is a 184-amino-acid chain: Large ribosomal subunit protein uL15 (184 aa).

The tract at residues 1–45 is disordered; that stretch reads MDLSSLRPAKGAVKNKKRVGRGQGSGNGTTAGKGNNGQQSRSGYK. Over residues 21–35 the composition is skewed to gly residues; the sequence is RGQGSGNGTTAGKGN.

Belongs to the universal ribosomal protein uL15 family. As to quaternary structure, part of the 50S ribosomal subunit.

Functionally, binds to the 23S rRNA. This chain is Large ribosomal subunit protein uL15, found in Pelodictyon phaeoclathratiforme (strain DSM 5477 / BU-1).